The sequence spans 116 residues: Ribosome-binding factor A (116 aa).

The protein belongs to the RbfA family. Monomer. Binds 30S ribosomal subunits, but not 50S ribosomal subunits or 70S ribosomes.

The protein resides in the cytoplasm. One of several proteins that assist in the late maturation steps of the functional core of the 30S ribosomal subunit. Associates with free 30S ribosomal subunits (but not with 30S subunits that are part of 70S ribosomes or polysomes). Required for efficient processing of 16S rRNA. May interact with the 5'-terminal helix region of 16S rRNA. In Chlorobium phaeobacteroides (strain BS1), this protein is Ribosome-binding factor A.